A 226-amino-acid polypeptide reads, in one-letter code: Small ribosomal subunit protein uS5 (226 aa).

A disordered region spans residues 1-71 (MEDIKHNKKP…RKNEKRTKSE (71 aa)). Residues 24–54 (ANPQANHANPNNRSASVNNNSVNNNKKNSSR) show a composition bias toward low complexity. An S5 DRBM domain is found at 72–135 (FEEKIVKISR…KMAENNVQKI (64 aa)).

Belongs to the universal ribosomal protein uS5 family. In terms of assembly, part of the 30S ribosomal subunit. Contacts proteins S4 and S8.

With S4 and S12 plays an important role in translational accuracy. Functionally, located at the back of the 30S subunit body where it stabilizes the conformation of the head with respect to the body. In Mycoplasmoides gallisepticum (strain R(low / passage 15 / clone 2)) (Mycoplasma gallisepticum), this protein is Small ribosomal subunit protein uS5.